The chain runs to 165 residues: Xanthine-guanine phosphoribosyltransferase (165 aa).

Residues 41–42 and 98–106 contribute to the 5-phospho-alpha-D-ribose 1-diphosphate site; these read RG and DDLTDTGKT. Mg(2+) is bound at residue D99. 2 residues coordinate guanine: D102 and I145. Xanthine-binding residues include D102 and I145. Residues 102 to 106 and 144 to 145 contribute to the GMP site; these read DTGKT and WI.

The protein belongs to the purine/pyrimidine phosphoribosyltransferase family. XGPT subfamily. In terms of assembly, homotetramer. The cofactor is Mg(2+).

It is found in the cell inner membrane. It carries out the reaction GMP + diphosphate = guanine + 5-phospho-alpha-D-ribose 1-diphosphate. The enzyme catalyses XMP + diphosphate = xanthine + 5-phospho-alpha-D-ribose 1-diphosphate. The catalysed reaction is IMP + diphosphate = hypoxanthine + 5-phospho-alpha-D-ribose 1-diphosphate. It functions in the pathway purine metabolism; GMP biosynthesis via salvage pathway; GMP from guanine: step 1/1. The protein operates within purine metabolism; XMP biosynthesis via salvage pathway; XMP from xanthine: step 1/1. In terms of biological role, purine salvage pathway enzyme that catalyzes the transfer of the ribosyl-5-phosphate group from 5-phospho-alpha-D-ribose 1-diphosphate (PRPP) to the N9 position of the 6-oxopurines guanine and xanthine to form the corresponding ribonucleotides GMP (guanosine 5'-monophosphate) and XMP (xanthosine 5'-monophosphate), with the release of PPi. To a lesser extent, also acts on hypoxanthine. This chain is Xanthine-guanine phosphoribosyltransferase, found in Brucella canis (strain ATCC 23365 / NCTC 10854 / RM-666).